A 269-amino-acid chain; its full sequence is MFSDKMILIAGPCVIEGEEITLEIASKIHELVSPYADRIHWIFKSSYDKANRSSINSYRGPGLSEGLRILSKVKETLGVEILTDVHSPEEARAAAEVCDILQIPAFLCRQTDLLVAAAETNAIINIKKGQFLSPWDMQGPVDKVLSTGNNKIILTERGCSFGYNNLVSDMRSIPVLSSMGFPVVFDGTHSVQLPGGLKTQSGGQTEFIPTLTRAALAAGAHGLFIETHSHPAIAKSDAASMLPLKTFEALLPLWDQLYTCVRSFEMASV.

Belongs to the KdsA family.

It localises to the cytoplasm. The catalysed reaction is D-arabinose 5-phosphate + phosphoenolpyruvate + H2O = 3-deoxy-alpha-D-manno-2-octulosonate-8-phosphate + phosphate. It participates in carbohydrate biosynthesis; 3-deoxy-D-manno-octulosonate biosynthesis; 3-deoxy-D-manno-octulosonate from D-ribulose 5-phosphate: step 2/3. The protein operates within bacterial outer membrane biogenesis; lipopolysaccharide biosynthesis. The polypeptide is 2-dehydro-3-deoxyphosphooctonate aldolase (Chlamydia felis (strain Fe/C-56) (Chlamydophila felis)).